The primary structure comprises 230 residues: 5'-methylthioadenosine/S-adenosylhomocysteine nucleosidase (230 aa).

Glu12 functions as the Proton acceptor in the catalytic mechanism. Substrate-binding positions include Gly78, Ile153, and 174-175; that span reads ME. Residue Asp198 is the Proton donor of the active site.

The protein belongs to the PNP/UDP phosphorylase family. MtnN subfamily.

It carries out the reaction S-adenosyl-L-homocysteine + H2O = S-(5-deoxy-D-ribos-5-yl)-L-homocysteine + adenine. It catalyses the reaction S-methyl-5'-thioadenosine + H2O = 5-(methylsulfanyl)-D-ribose + adenine. The enzyme catalyses 5'-deoxyadenosine + H2O = 5-deoxy-D-ribose + adenine. It functions in the pathway amino-acid biosynthesis; L-methionine biosynthesis via salvage pathway; S-methyl-5-thio-alpha-D-ribose 1-phosphate from S-methyl-5'-thioadenosine (hydrolase route): step 1/2. In terms of biological role, catalyzes the irreversible cleavage of the glycosidic bond in both 5'-methylthioadenosine (MTA) and S-adenosylhomocysteine (SAH/AdoHcy) to adenine and the corresponding thioribose, 5'-methylthioribose and S-ribosylhomocysteine, respectively. Also cleaves 5'-deoxyadenosine, a toxic by-product of radical S-adenosylmethionine (SAM) enzymes, into 5-deoxyribose and adenine. This chain is 5'-methylthioadenosine/S-adenosylhomocysteine nucleosidase, found in Shewanella pealeana (strain ATCC 700345 / ANG-SQ1).